The sequence spans 143 residues: AP-2 complex subunit sigma (143 aa).

Belongs to the adaptor complexes small subunit family. In terms of assembly, adaptor protein complex 2 (AP-2) is a heterotetramer composed of two large adaptins (alpha-type subunit APL3 and beta-type subunit APL1), a medium chain (mu-type subunit APM4) and a small adaptin (sigma-type subunit APS2).

It is found in the cell membrane. Its subcellular location is the membrane. The protein localises to the coated pit. Component of the adaptor complexes which link clathrin to receptors in coated vesicles. Clathrin-associated protein complexes are believed to interact with the cytoplasmic tails of membrane proteins, leading to their selection and concentration. The polypeptide is AP-2 complex subunit sigma (aps-2) (Neurospora crassa (strain ATCC 24698 / 74-OR23-1A / CBS 708.71 / DSM 1257 / FGSC 987)).